A 252-amino-acid chain; its full sequence is tRNA (guanine-N(7)-)-methyltransferase (252 aa).

S-adenosyl-L-methionine contacts are provided by Glu-51, Asp-76, Asn-103, and Asp-125. The active site involves Asp-125. Substrate is bound by residues Lys-129, Asp-159, and 199–202 (TYYE).

Belongs to the class I-like SAM-binding methyltransferase superfamily. TrmB family.

The catalysed reaction is guanosine(46) in tRNA + S-adenosyl-L-methionine = N(7)-methylguanosine(46) in tRNA + S-adenosyl-L-homocysteine. Its pathway is tRNA modification; N(7)-methylguanine-tRNA biosynthesis. Its function is as follows. Catalyzes the formation of N(7)-methylguanine at position 46 (m7G46) in tRNA. This chain is tRNA (guanine-N(7)-)-methyltransferase, found in Bacteroides thetaiotaomicron (strain ATCC 29148 / DSM 2079 / JCM 5827 / CCUG 10774 / NCTC 10582 / VPI-5482 / E50).